A 381-amino-acid polypeptide reads, in one-letter code: Hps1-dma1 cluster transcription factor tfc7 (381 aa).

A DNA-binding region (zn(2)-C6 fungal-type) is located at residues Cys10–Cys37. The tract at residues Arg41–Met88 is disordered. 2 stretches are compositionally biased toward polar residues: residues Arg50–Ile59 and Arg67–Ser80.

Its subcellular location is the nucleus. Transcription factor that regulates the expression of the hps1-dma1 gene cluster that probably mediates the biosynthesis a derivative of cyclopiazonic acid (CPA). Further studies are required to whether the CPA-like hps1-dma1 cluster is functional or a non-functional relic reflecting evolution of D.septosporum. The sequence is that of Hps1-dma1 cluster transcription factor tfc7 (tfc7) from Dothistroma septosporum (strain NZE10 / CBS 128990) (Red band needle blight fungus).